The primary structure comprises 142 residues: Large ribosomal subunit protein uL11 (142 aa).

It belongs to the universal ribosomal protein uL11 family. Part of the ribosomal stalk of the 50S ribosomal subunit. Interacts with L10 and the large rRNA to form the base of the stalk. L10 forms an elongated spine to which L12 dimers bind in a sequential fashion forming a multimeric L10(L12)X complex. In terms of processing, one or more lysine residues are methylated.

Forms part of the ribosomal stalk which helps the ribosome interact with GTP-bound translation factors. The sequence is that of Large ribosomal subunit protein uL11 from Proteus mirabilis (strain HI4320).